The following is a 215-amino-acid chain: Pyrrolidone-carboxylate peptidase (215 aa).

Active-site residues include E78, C141, and H165.

This sequence belongs to the peptidase C15 family. As to quaternary structure, homotetramer.

The protein resides in the cytoplasm. The catalysed reaction is Release of an N-terminal pyroglutamyl group from a polypeptide, the second amino acid generally not being Pro.. Removes 5-oxoproline from various penultimate amino acid residues except L-proline. This chain is Pyrrolidone-carboxylate peptidase, found in Streptococcus pyogenes serotype M3 (strain SSI-1).